The sequence spans 174 residues: MIRLSAAAALGLAAALAASPALAQTSATAVVKAGDGKDAGAVTVTEAPHGVLLKLELKGLTPGWHAAHFHEKGDCGTPDFKSAGAHVHTAATTVHGLLNPDANDSGDLPNIFAAADGAATAEIYSPLVSLKGAGGRPALLDADGSSIVVHANPDDHKTQPIGGAGARVACGVIK.

An N-terminal signal peptide occupies residues 1 to 23 (MIRLSAAAALGLAAALAASPALA). Residues histidine 68, histidine 70, and histidine 86 each coordinate Cu cation. An intrachain disulfide couples cysteine 75 to cysteine 170. Zn(2+) is bound by residues histidine 86, histidine 95, aspartate 104, and aspartate 107. Histidine 150 is a binding site for Cu cation.

Belongs to the Cu-Zn superoxide dismutase family. Homodimer. Cu cation serves as cofactor. Zn(2+) is required as a cofactor.

The protein resides in the periplasm. The catalysed reaction is 2 superoxide + 2 H(+) = H2O2 + O2. Its function is as follows. Destroys radicals which are normally produced within the cells and which are toxic to biological systems. May function against extracytoplasmic toxic oxygen species. The chain is Superoxide dismutase [Cu-Zn] (sodC) from Caulobacter vibrioides (strain ATCC 19089 / CIP 103742 / CB 15) (Caulobacter crescentus).